We begin with the raw amino-acid sequence, 1135 residues long: Envelopment polyprotein (1135 aa).

The signal sequence occupies residues 1–35; sequence MRILKLLELVVKVSLFTIALSSVLLAFLIFRATDA. The Lumenal portion of the chain corresponds to 36-314; it reads KVEIIRGDHP…KYSKSIYKQT (279 aa). Positions 41–43 match the Cell attachment site motif; sequence RGD. Disulfide bonds link cysteine 114–cysteine 145 and cysteine 122–cysteine 156. The N-linked (GlcNAc...) asparagine; by host glycan is linked to asparagine 116. The non-covalent dimerization stretch occupies residues 177-195; sequence LDKKRHFSVGGKFFISESL. The N-linked (GlcNAc...) asparagine; by host glycan is linked to asparagine 210. An intrachain disulfide couples cysteine 224 to cysteine 285. A helical transmembrane segment spans residues 315 to 366; sequence ACINFSWIRLILIALLIYFPIRWLVNKTTKPLFLWYDLMGLITYPVLLLINC. The Cytoplasmic segment spans residues 367 to 484; it reads LWKYFPLKCS…VPGCPFLVTS (118 aa). The interval 437 to 484 is signal for signal peptide peptidase; the sequence is LSLSLLKFVTEILIGLVILSQMPMSMAQTTQCLSGCFYVPGCPFLVTS. Residues 485-1067 lie on the Lumenal side of the membrane; that stretch reads KFEKCSEKDQ…YFGSFFDTIR (583 aa). 2 N-linked (GlcNAc...) asparagine; by host glycosylation sites follow: asparagine 605 and asparagine 980. A helical membrane pass occupies residues 1068–1088; the sequence is VVLLIAFIFLVTYFCSILTSI. Over 1089 to 1135 the chain is Cytoplasmic; sequence CKGYVKNESYKSRSKIEDDDEPEIKAPMLMKDTMTRRRPPMDFSHLV.

Belongs to the tospovirus envelope glycoprotein family. As to quaternary structure, homodimer; disulfide-linked. Heterodimer with Glycoprotein C. Interacts with nucleoprotein. In terms of assembly, heterodimer with Glycoprotein N. Interacts with nucleoprotein. Post-translationally, specific enzymatic cleavages in vivo yield mature proteins including Glycoprotein N and Glycoprotein C. In terms of processing, glycosylated with O-linked glycans. Glycosylation is essential for proper subcellular location. Cleaved at acidic pH.

The protein resides in the virion membrane. Its subcellular location is the host Golgi apparatus membrane. It is found in the host endoplasmic reticulum membrane. Its function is as follows. Forms the spikes present at the surface of the virion together with Glycoprotein C. They are able to attach the virion to a cell receptor and to promote fusion of membranes after endocytosis of the virion. Plays a role in virus binding and/or entry into the vector midgut. In terms of biological role, forms the spikes present at the surface of the virion together with Glycoprotein N. They are able to attach the virion to a cell receptor and to promote fusion of membranes after endocytosis of the virion. Probable class II fusion protein. In Tomato spotted wilt virus (strain Brazilian Br-01) (TSWV), this protein is Envelopment polyprotein (GP).